We begin with the raw amino-acid sequence, 252 residues long: Small ribosomal subunit protein uS2 (252 aa).

It belongs to the universal ribosomal protein uS2 family.

This Alcanivorax borkumensis (strain ATCC 700651 / DSM 11573 / NCIMB 13689 / SK2) protein is Small ribosomal subunit protein uS2.